A 1205-amino-acid chain; its full sequence is Caskin-2 (1205 aa).

6 ANK repeats span residues 48–77 (DGFSALHHAALSGNSELLLLLLEMQASVDI), 81–110 (NGMRPLHYAAWQGQPEPVRLLLRASASVNA), 114–143 (DGQIPLHLAAQYGHYEVSETLLQHQSNPCH), 147–176 (GKKTPLDLACEFGRVKVVQLLLNSHLCVSL), 188–217 (NFTTPLHLAAKNGHLEVIRLLLKLGIEINK), and 220–249 (KMGTALHEAALCGKTEVVKLLIENGVDVNI). The SH3 domain maps to 281 to 347 (SGILKVRALK…PPSIVEVISK (67 aa)). Composition is skewed to polar residues over residues 377–388 (SPGSQLGINPDT) and 398–411 (GSESSVRSAGSGQS). Positions 377 to 411 (SPGSQLGINPDTSVAGDRHSVGSESSVRSAGSGQS) are disordered. SAM domains follow at residues 468–531 (KDAE…LIVA) and 537–601 (QIPV…LLDL). Low complexity predominate over residues 666 to 687 (RRSFSQESISSRSQGSGHSQES). Disordered stretches follow at residues 666–689 (RRSFSQESISSRSQGSGHSQESAS), 784–964 (RPGR…QRHL), 984–1054 (QIAA…SQEP), and 1132–1155 (SEASSREQTCIPQQSISNSDKGPP). A compositionally biased stretch (polar residues) spans 823-840 (SSMSSAEGQSPEGQSSVK). Residues 908 to 919 (ISSQHSSSESIP) show a composition bias toward low complexity. Residues 942 to 959 (DATSELSPTQESQLQSAE) show a composition bias toward polar residues. Over residues 1009 to 1037 (KNEEHDFNLTESDTVKRRPKVKEKEEESP) the composition is skewed to basic and acidic residues. Composition is skewed to polar residues over residues 1042 to 1054 (ANNSPSLIPSQEP) and 1137 to 1155 (REQTCIPQQSISNSDKGPP).

The sequence is that of Caskin-2 (caskin2) from Xenopus laevis (African clawed frog).